A 239-amino-acid polypeptide reads, in one-letter code: Ribonuclease PH (239 aa).

Phosphate is bound by residues R86 and 124–126 (GTR).

This sequence belongs to the RNase PH family. As to quaternary structure, homohexameric ring arranged as a trimer of dimers.

It carries out the reaction tRNA(n+1) + phosphate = tRNA(n) + a ribonucleoside 5'-diphosphate. Phosphorolytic 3'-5' exoribonuclease that plays an important role in tRNA 3'-end maturation. Removes nucleotide residues following the 3'-CCA terminus of tRNAs; can also add nucleotides to the ends of RNA molecules by using nucleoside diphosphates as substrates, but this may not be physiologically important. Probably plays a role in initiation of 16S rRNA degradation (leading to ribosome degradation) during starvation. In Rickettsia bellii (strain OSU 85-389), this protein is Ribonuclease PH.